A 425-amino-acid polypeptide reads, in one-letter code: tRNA(Ile)-lysidine synthase (425 aa).

27-32 (SGGLDS) lines the ATP pocket.

Belongs to the tRNA(Ile)-lysidine synthase family.

Its subcellular location is the cytoplasm. It catalyses the reaction cytidine(34) in tRNA(Ile2) + L-lysine + ATP = lysidine(34) in tRNA(Ile2) + AMP + diphosphate + H(+). Functionally, ligates lysine onto the cytidine present at position 34 of the AUA codon-specific tRNA(Ile) that contains the anticodon CAU, in an ATP-dependent manner. Cytidine is converted to lysidine, thus changing the amino acid specificity of the tRNA from methionine to isoleucine. The polypeptide is tRNA(Ile)-lysidine synthase (Streptococcus sanguinis (strain SK36)).